The chain runs to 217 residues: Octanoyltransferase (217 aa).

Residues 30–209 enclose the BPL/LPL catalytic domain; it reads GNRPPTLLLL…AFAEVFGLRP (180 aa). Residues 75–82, 139–141, and 152–154 each bind substrate; these read RGGDVTYH, AIG, and GFA. Cysteine 170 functions as the Acyl-thioester intermediate in the catalytic mechanism.

Belongs to the LipB family.

It localises to the cytoplasm. The catalysed reaction is octanoyl-[ACP] + L-lysyl-[protein] = N(6)-octanoyl-L-lysyl-[protein] + holo-[ACP] + H(+). The protein operates within protein modification; protein lipoylation via endogenous pathway; protein N(6)-(lipoyl)lysine from octanoyl-[acyl-carrier-protein]: step 1/2. Its function is as follows. Catalyzes the transfer of endogenously produced octanoic acid from octanoyl-acyl-carrier-protein onto the lipoyl domains of lipoate-dependent enzymes. Lipoyl-ACP can also act as a substrate although octanoyl-ACP is likely to be the physiological substrate. This is Octanoyltransferase from Thermus thermophilus (strain ATCC 27634 / DSM 579 / HB8).